We begin with the raw amino-acid sequence, 225 residues long: Suppressor of cytokine signaling 3 (225 aa).

A kinase inhibitory region (KIR) region spans residues 22–33 (LKTFSSKSEYQL). The tract at residues 34-45 (VVNAVRKLQESG) is extended SH2 subdomain (ESS). Positions 46 to 142 (FYWSAVTGGE…TPSFSLPPTE (97 aa)) constitute an SH2 domain. A disordered region spans residues 131 to 160 (PGTPSFSLPPTEPSSEVPEQPPAQALPGST). In terms of domain architecture, SOCS box spans 177–224 (VLSRPLSSNVATLQHLCRKTVNGHLDSYEKVTQLPGPIREFLDQYDAP).

In terms of assembly, interacts with multiple activated proteins of the tyrosine kinase signaling pathway including IGF1 receptor, insulin receptor and JAK2. Binding to JAK2 is mediated through the KIR and SH2 domains to a phosphorylated tyrosine residue within the JAK2 JH1 domain. Binds specific activated tyrosine residues of the leptin, EPO, IL12, GSCF and gp130 receptors. Interaction with CSNK1E stabilizes SOCS3 protein. Component of the probable ECS(SOCS3) E3 ubiquitin-protein ligase complex which contains CUL5, RNF7/RBX2, elongin BC complex and SOCS3. Interacts with CUL5, RNF7, ELOB and ELOC. Interacts with FGFR3. Interacts with INSR. Interacts with BCL10; this interaction may interfere with BCL10-binding with PELI2. Interacts with NOD2 (via CARD domain); the interaction promotes NOD2 degradation. Phosphorylated on tyrosine residues after stimulation by the cytokines, IL-2, EPO or IGF1. As to expression, low expression in lung, spleen and thymus. Expressed in Th2 but not TH1 cells.

It participates in protein modification; protein ubiquitination. Its function is as follows. SOCS family proteins form part of a classical negative feedback system that regulates cytokine signal transduction. SOCS3 is involved in negative regulation of cytokines that signal through the JAK/STAT pathway. Inhibits cytokine signal transduction by binding to tyrosine kinase receptors including IL6ST/gp130, LIF, erythropoietin, insulin, IL12, GCSF and leptin receptors. Binding to JAK2 inhibits its kinase activity and regulates IL6 signaling. Suppresses fetal liver erythropoiesis. Regulates onset and maintenance of allergic responses mediated by T-helper type 2 cells. Probable substrate recognition component of a SCF-like ECS (Elongin BC-CUL2/5-SOCS-box protein) E3 ubiquitin-protein ligase complex which mediates the ubiquitination and subsequent proteasomal degradation of target proteins. In Mus musculus (Mouse), this protein is Suppressor of cytokine signaling 3.